The chain runs to 218 residues: Probable nicotinate-nucleotide adenylyltransferase (218 aa).

This sequence belongs to the NadD family.

It carries out the reaction nicotinate beta-D-ribonucleotide + ATP + H(+) = deamido-NAD(+) + diphosphate. The protein operates within cofactor biosynthesis; NAD(+) biosynthesis; deamido-NAD(+) from nicotinate D-ribonucleotide: step 1/1. Its function is as follows. Catalyzes the reversible adenylation of nicotinate mononucleotide (NaMN) to nicotinic acid adenine dinucleotide (NaAD). This is Probable nicotinate-nucleotide adenylyltransferase from Syntrophotalea carbinolica (strain DSM 2380 / NBRC 103641 / GraBd1) (Pelobacter carbinolicus).